A 487-amino-acid polypeptide reads, in one-letter code: Serine/threonine-protein kinase 4 (487 aa).

Methionine 1 carries the post-translational modification N-acetylmethionine. Threonine 3 is modified (phosphothreonine). The Protein kinase domain occupies 30–281 (FDVLEKLGEG…ATQLLQHPFV (252 aa)). Residues 36-44 (LGEGSYGSV) and lysine 59 each bind ATP. The Proton acceptor role is filled by aspartate 149. The residue at position 183 (threonine 183) is a Phosphothreonine; by autocatalysis. Phosphoserine is present on serine 265. The stretch at 290–310 (LRDLINEAMDVKLKRQESQQR) forms a coiled coil. Basic and acidic residues predominate over residues 303-312 (KRQESQQREV). A disordered region spans residues 303-332 (KRQESQQREVDQDDEENSEEDEMDSGTMVR). The segment covering 313 to 326 (DQDDEENSEEDEMD) has biased composition (acidic residues). Position 320 is a phosphoserine (serine 320). 2 positions are modified to phosphothreonine: threonine 340 and threonine 367. Phosphothreonine; by PKB/AKT1 is present on threonine 387. Serine 410 and serine 414 each carry phosphoserine. At tyrosine 433 the chain carries Phosphotyrosine. In terms of domain architecture, SARAH spans 433–480 (YEFLKSWTVEDLQKRLLALDPMMEQEIEEIRQKYQSKRQPILDAIEAK).

Belongs to the protein kinase superfamily. STE Ser/Thr protein kinase family. STE20 subfamily. Homodimer; mediated via the coiled-coil region. Interacts with NORE1, which inhibits autoactivation. Interacts with and stabilizes SAV1. Interacts with RASSF1. Interacts with FOXO3. Interacts with RASSF2 (via SARAH domain). Interacts with AR, PKB/AKT1, TNNI3 and SIRT1. Interacts with DLG5 (via PDZ domain 3). Interacts with MARK3 and SCRIB in the presence of DLG5. The cofactor is Mg(2+). Post-translationally, autophosphorylated on serine and threonine residues. Phosphorylation at Thr-387 by PKB/AKT1, leads to inhibition of its: kinase activity, nuclear translocation and autophosphorylation at Thr-183. It also diminishes its cleavage by caspases and its ability to phosphorylate FOXO3. In terms of processing, proteolytically cleaved by caspase-3 during apoptosis at Asp-326 and Asp-349 resulting in a 37 kDa or a 39 kDa subunit respectively. The 39 kDa subunit is further cleaved into the 37 kDa form. Proteolytic cleavage results in kinase activation and nuclear translocation of the truncated form (MST1/N). It is less likely that cleavage at Asp-349 is a prerequisite for activation as this site is not conserved in the murine ortholog.

The protein resides in the cytoplasm. It is found in the nucleus. The catalysed reaction is L-seryl-[protein] + ATP = O-phospho-L-seryl-[protein] + ADP + H(+). It catalyses the reaction L-threonyl-[protein] + ATP = O-phospho-L-threonyl-[protein] + ADP + H(+). Inhibited by the C-terminal non-catalytic region. Activated by caspase-cleavage. Full activation also requires homodimerization and autophosphorylation of Thr-183. Activated by RASSF1 which acts by preventing its dephosphorylation. Functionally, stress-activated, pro-apoptotic kinase which, following caspase-cleavage, enters the nucleus and induces chromatin condensation followed by internucleosomal DNA fragmentation. Key component of the Hippo signaling pathway which plays a pivotal role in organ size control and tumor suppression by restricting proliferation and promoting apoptosis. The core of this pathway is composed of a kinase cascade wherein STK3/MST2 and STK4/MST1, in complex with its regulatory protein SAV1, phosphorylates and activates LATS1/2 in complex with its regulatory protein MOB1, which in turn phosphorylates and inactivates YAP1 oncoprotein and WWTR1/TAZ. Phosphorylation of YAP1 by LATS2 inhibits its translocation into the nucleus to regulate cellular genes important for cell proliferation, cell death, and cell migration. STK3/MST2 and STK4/MST1 are required to repress proliferation of mature hepatocytes, to prevent activation of facultative adult liver stem cells (oval cells), and to inhibit tumor formation. Phosphorylates 'Ser-14' of histone H2B (H2BS14ph) during apoptosis. Phosphorylates FOXO3 upon oxidative stress, which results in its nuclear translocation and cell death initiation. Phosphorylates MOBKL1A, MOBKL1B and RASSF2. Phosphorylates TNNI3 (cardiac Tn-I) and alters its binding affinity to TNNC1 (cardiac Tn-C) and TNNT2 (cardiac Tn-T). Phosphorylates FOXO1 on 'Ser-212' and regulates its activation and stimulates transcription of PMAIP1 in a FOXO1-dependent manner. Phosphorylates SIRT1 and inhibits SIRT1-mediated p53/TP53 deacetylation, thereby promoting p53/TP53 dependent transcription and apoptosis upon DNA damage. Acts as an inhibitor of PKB/AKT1. Phosphorylates AR on 'Ser-650' and suppresses its activity by intersecting with PKB/AKT1 signaling and antagonizing formation of AR-chromatin complexes. This chain is Serine/threonine-protein kinase 4 (STK4), found in Chlorocebus aethiops (Green monkey).